Here is a 366-residue protein sequence, read N- to C-terminus: Histidinol-phosphate aminotransferase (366 aa).

Lys228 carries the N6-(pyridoxal phosphate)lysine modification.

This sequence belongs to the class-II pyridoxal-phosphate-dependent aminotransferase family. Histidinol-phosphate aminotransferase subfamily. As to quaternary structure, homodimer. Pyridoxal 5'-phosphate is required as a cofactor.

It carries out the reaction L-histidinol phosphate + 2-oxoglutarate = 3-(imidazol-4-yl)-2-oxopropyl phosphate + L-glutamate. It participates in amino-acid biosynthesis; L-histidine biosynthesis; L-histidine from 5-phospho-alpha-D-ribose 1-diphosphate: step 7/9. In Campylobacter fetus subsp. fetus (strain 82-40), this protein is Histidinol-phosphate aminotransferase.